We begin with the raw amino-acid sequence, 508 residues long: MGLPWYRVHTVVLNDPGRLIAVHIMHTALVAGWAGSMALYELAVFDPSDPVLDPMWRQGMFVIPFMTRLGITDSWGGWSITGGTVTNPGIWSYEGVAGAHIVFSGLCFLAAIWHWVYWDLAIFVDDRTGKRSLDLPKIFGIHLFLSGVACFGFGTFHVTGLYGPGIWVSDPYGLTGKVQSVNPAWGVEGFDPFVPGGIASHHIAAGTLGILAGLFHLSVRPPQRLYKGLRMGNIETVLSSSIAAVFFAAFVVAGTMWYGSATTPIELFGPTRYQWDQGYFQQEIYRRVSAGLAENQSLSEAWSKIPEKLAFYDYIGNNPAKGGLFRAGSMDNGDGIAVGWLGHPIFRDKEGRELFVRRMPTFFETFPVVLVDGDGIVRADVPFRRAESKYSVEQVGVTVEFYGGELNGVSYSDPATVKKYARRAQLGEIFELDRATLKSDGVFRSSPRGWFTFGHASFALLFFFGHIWHGARTLFRDVFAGIDPDLDAQVEFGVFQKLGDPTTRRQVV.

The next 6 helical transmembrane spans lie at 21–36 (AVHIMHTALVAGWAGS), 101–115 (IVFSGLCFLAAIWHW), 140–156 (GIHLFLSGVACFGFGTF), 203–218 (IAAGTLGILAGLFHLS), 237–252 (VLSSSIAAVFFAAFVV), and 457–472 (SFALLFFFGHIWHGAR).

It belongs to the PsbB/PsbC family. PsbB subfamily. PSII is composed of 1 copy each of membrane proteins PsbA, PsbB, PsbC, PsbD, PsbE, PsbF, PsbH, PsbI, PsbJ, PsbK, PsbL, PsbM, PsbT, PsbX, PsbY, PsbZ, Psb30/Ycf12, at least 3 peripheral proteins of the oxygen-evolving complex and a large number of cofactors. It forms dimeric complexes. The cofactor is Binds multiple chlorophylls. PSII binds additional chlorophylls, carotenoids and specific lipids..

The protein resides in the plastid. Its subcellular location is the chloroplast thylakoid membrane. Functionally, one of the components of the core complex of photosystem II (PSII). It binds chlorophyll and helps catalyze the primary light-induced photochemical processes of PSII. PSII is a light-driven water:plastoquinone oxidoreductase, using light energy to abstract electrons from H(2)O, generating O(2) and a proton gradient subsequently used for ATP formation. The polypeptide is Photosystem II CP47 reaction center protein (Citrus sinensis (Sweet orange)).